We begin with the raw amino-acid sequence, 441 residues long: CBL-interacting serine/threonine-protein kinase 6 (441 aa).

In terms of domain architecture, Protein kinase spans 24 to 278; sequence YELGRLLGHG…IEKVMDSPWF (255 aa). ATP is bound by residues 30–38 and Lys-53; that span reads LGHGTFAKV. Catalysis depends on Asp-146, which acts as the Proton acceptor. Residues 164–193 are activation loop; that stretch reads DFGLSAFTEHLKQDGLLHTTCGTPAYVAPE. Residue Ser-168 is modified to Phosphoserine. At Thr-182 the chain carries Phosphothreonine. The 25-residue stretch at 310-334 folds into the NAF domain; the sequence is EETETLNAFHIIALSEGFDLSPLFE. Positions 341–371 are PPI; that stretch reads KREMRFATSRPASSVISSLEEAARVGNKFDV.

This sequence belongs to the protein kinase superfamily. CAMK Ser/Thr protein kinase family. SNF1 subfamily. Part of a K(+)-channel calcium-sensing kinase/phosphatase complex composed by a calcium sensor CBL (CBL1, CBL2, CBL3 or CBL9), a kinase CIPK (CIPK6, CIPK16 or CIPK23), a phosphatase PP2C (AIP1) and a K(+)-channel (AKT1). Interacts with AKT1, AKT2,CBL1, CBL2, CBL3, CBL4/SOS3 and CBL9. Mn(2+) serves as cofactor. Post-translationally, autophosphorylated. Expressed in roots and shoots.

The protein localises to the endoplasmic reticulum. It carries out the reaction L-seryl-[protein] + ATP = O-phospho-L-seryl-[protein] + ADP + H(+). The enzyme catalyses L-threonyl-[protein] + ATP = O-phospho-L-threonyl-[protein] + ADP + H(+). Functionally, CIPK serine-threonine protein kinases interact with CBL proteins. Binding of a CBL protein to the regulatory NAF domain of CIPK protein lead to the activation of the kinase in a calcium-dependent manner. Downstream of CBL1, CBL2, CBL3 and CBL9, regulates by phosphorylation the K(+) conductance and uptake of AKT1. Binds to CBL4 to modulate AKT2 activity by promoting a kinase interaction-dependent but phosphorylation-independent translocation of the channel to the plasma membrane. In Arabidopsis thaliana (Mouse-ear cress), this protein is CBL-interacting serine/threonine-protein kinase 6 (CIPK6).